The primary structure comprises 641 residues: Chaperone protein DnaK (641 aa).

Thr-200 carries the phosphothreonine; by autocatalysis modification. Over residues 605–623 (AAEQGGSADAASGNAQASK) the composition is skewed to low complexity. The tract at residues 605–628 (AAEQGGSADAASGNAQASKAADDV) is disordered.

Belongs to the heat shock protein 70 family.

In terms of biological role, acts as a chaperone. The sequence is that of Chaperone protein DnaK from Xanthomonas oryzae pv. oryzae (strain KACC10331 / KXO85).